We begin with the raw amino-acid sequence, 140 residues long: uncharacterized protein (140 aa).

The 129-residue stretch at 3–131 (RLDHIGIAVF…NGVLVELCEP (129 aa)) folds into the VOC domain. Histidine 6, glutamate 53, histidine 77, and glutamate 127 together coordinate a divalent metal cation.

This sequence belongs to the methylmalonyl-CoA epimerase family.

This is an uncharacterized protein from Bacillus subtilis (strain 168).